Here is a 444-residue protein sequence, read N- to C-terminus: Endothelin-3 receptor (444 aa).

The N-terminal stretch at 1–18 (MATVILFVAWMACLMVGV) is a signal peptide. The Extracellular portion of the chain corresponds to 19-88 (CYQEFQTQQN…SRAKIRHAFK (70 aa)). Residue Asn60 is glycosylated (N-linked (GlcNAc...) asparagine). Residues 89–113 (YVTTILSCVIFLVGIVGNSTLLRII) traverse the membrane as a helical segment. Over 114–124 (YKNKCMRNGPN) the chain is Cytoplasmic. The helical transmembrane segment at 125 to 145 (VLIASLALGDLFYILIAIPII) threads the bilayer. Topologically, residues 146–161 (SISFWLSTGHSEYIYQ) are extracellular. A helical membrane pass occupies residues 162–180 (LVHLYRARVYSLSLCALSI). Residues 181 to 201 (DRYRAVASWNRIRSIGIPVRK) are Cytoplasmic-facing. Residues 202-226 (AIELTLIWAVAIIVAVPEAIAFNLV) traverse the membrane as a helical segment. Residues 227-254 (ELDFRGQTILVCMLPMEQTSDFMRFYQE) are Extracellular-facing. Residues 255–279 (VKVWWLFGFYFCLPLACTGVFYTLM) form a helical membrane-spanning segment. Residues 280–307 (SCEMLSIKNGMRIALNDHMKQRREVAKT) lie on the Cytoplasmic side of the membrane. The chain crosses the membrane as a helical span at residues 308 to 328 (VFCLVVIFALCWLPLHVSSIF). Residues 329 to 365 (VRLSATVKRACILKNKRSCIMAEIQTGVNYQLLMVMN) are Extracellular-facing. A helical transmembrane segment spans residues 366–386 (YTGINMASLNSCIGPVALYFV). Residues 387–444 (SRKFKNCFQSCLCCWCHRPTLTITPMDEKGSGGKWKANGHDLDLDRSSSRLSNKYSSS) are Cytoplasmic-facing. Residues 416 to 444 (GSGGKWKANGHDLDLDRSSSRLSNKYSSS) form a disordered region. Residues 424-434 (NGHDLDLDRSS) show a composition bias toward basic and acidic residues. The segment covering 435-444 (SRLSNKYSSS) has biased composition (low complexity).

It belongs to the G-protein coupled receptor 1 family. Endothelin receptor subfamily.

Its subcellular location is the cell membrane. In terms of biological role, receptor for endothelin-3. Mediates its action by association with G proteins that activate a phosphatidylinositol-calcium second messenger system. In Xenopus laevis (African clawed frog), this protein is Endothelin-3 receptor.